Consider the following 450-residue polypeptide: MIPEHLSIYTAYNANIDAIVKLNQETIQNLINAFDPDEVKRRIEEYPREINEPIDFVARLVHTLKLGKPAAVPLVNEKMNEWFDKTFRYEEERLGGQAGIIANTLAGLKIRKVIAYTPFLPKRLAELFKKGVLYPVVENGELQFKPIQEAYREGDPLKINRIFEFRKGLKFKLGDETIEIPNSGRFIVSARFESISRIETREDIKPFLGEIGKEVDGAIFSGYQGLRTKYSDGKDANYYLRRAKEDIIEFKEKDVKIHVEFASVQDRKLRKKIITNILPFVDSVGIDEAEIAQILSVLGYRELADRIFTYNRLEDSILGGMIILDELNFEILQVHTTYYLMYITHRDNPLSEEELAKSLEFGTTLAAARASLGDIRGPDDYKVGLKVPFNERSEYVKLRFEEAKSRLRMREYKVVVIPTRLVQNPVLTVGLGDTISAGAFLTYLEFLKRH.

Residues 1–449 (MIPEHLSIYT…FLTYLEFLKR (449 aa)) enclose the ADPK domain. Mg(2+) contacts are provided by E260, E290, and D433. Residue D433 is the Proton acceptor of the active site.

The protein belongs to the carbohydrate kinase PfkC family. The cofactor is Mg(2+).

Its subcellular location is the cytoplasm. The catalysed reaction is beta-D-fructose 6-phosphate + ADP = beta-D-fructose 1,6-bisphosphate + AMP + H(+). The protein operates within carbohydrate degradation; glycolysis. Functionally, catalyzes the phosphorylation of fructose 6-phosphate to fructose 1,6-bisphosphate using ADP as the phosphate donor. The sequence is that of ADP-specific phosphofructokinase from Pyrococcus horikoshii (strain ATCC 700860 / DSM 12428 / JCM 9974 / NBRC 100139 / OT-3).